A 211-amino-acid polypeptide reads, in one-letter code: Guanylate kinase (211 aa).

Residues 5 to 185 (GLLLILSSPS…AEEQLKMILS (181 aa)) form the Guanylate kinase-like domain. 12-19 (SPSGAGKS) is a binding site for ATP.

This sequence belongs to the guanylate kinase family.

Its subcellular location is the cytoplasm. It catalyses the reaction GMP + ATP = GDP + ADP. Its function is as follows. Essential for recycling GMP and indirectly, cGMP. The chain is Guanylate kinase from Cereibacter sphaeroides (strain ATCC 17023 / DSM 158 / JCM 6121 / CCUG 31486 / LMG 2827 / NBRC 12203 / NCIMB 8253 / ATH 2.4.1.) (Rhodobacter sphaeroides).